The chain runs to 124 residues: Large ribosomal subunit protein bL12 (124 aa).

Belongs to the bacterial ribosomal protein bL12 family. In terms of assembly, homodimer. Part of the ribosomal stalk of the 50S ribosomal subunit. Forms a multimeric L10(L12)X complex, where L10 forms an elongated spine to which 2 to 4 L12 dimers bind in a sequential fashion. Binds GTP-bound translation factors.

In terms of biological role, forms part of the ribosomal stalk which helps the ribosome interact with GTP-bound translation factors. Is thus essential for accurate translation. The sequence is that of Large ribosomal subunit protein bL12 from Cupriavidus necator (strain ATCC 17699 / DSM 428 / KCTC 22496 / NCIMB 10442 / H16 / Stanier 337) (Ralstonia eutropha).